Reading from the N-terminus, the 128-residue chain is MQRHMLKSKIHRAAVTHCELHYEGSCAIDEDLLEAAGLIENERIDIWNINNGERFSTYAIKGERGSGMISLNGSAARRAQLGDLVIIAAFAMVDEAELQAGWKPKLVFIDDGNKIKGHRDHVPTQNWT.

S25 functions as the Schiff-base intermediate with substrate; via pyruvic acid in the catalytic mechanism. S25 carries the pyruvic acid (Ser) modification. Substrate is bound at residue T57. Y58 serves as the catalytic Proton donor. Residue 73–75 (GSA) coordinates substrate.

This sequence belongs to the PanD family. Heterooctamer of four alpha and four beta subunits. Pyruvate serves as cofactor. Post-translationally, is synthesized initially as an inactive proenzyme, which is activated by self-cleavage at a specific serine bond to produce a beta-subunit with a hydroxyl group at its C-terminus and an alpha-subunit with a pyruvoyl group at its N-terminus.

The protein resides in the cytoplasm. The enzyme catalyses L-aspartate + H(+) = beta-alanine + CO2. The protein operates within cofactor biosynthesis; (R)-pantothenate biosynthesis; beta-alanine from L-aspartate: step 1/1. Its function is as follows. Catalyzes the pyruvoyl-dependent decarboxylation of aspartate to produce beta-alanine. This Burkholderia cenocepacia (strain HI2424) protein is Aspartate 1-decarboxylase.